We begin with the raw amino-acid sequence, 37 residues long: MKVRASVKKMCEKCRVIRRHGRVMVICSNPKHKQRQG.

The protein belongs to the bacterial ribosomal protein bL36 family.

This Prochlorococcus marinus (strain MIT 9303) protein is Large ribosomal subunit protein bL36.